The sequence spans 283 residues: Digeranylgeranylglyceryl phosphate synthase (283 aa).

8 helical membrane-spanning segments follow: residues 5-27 (VEII…AILA), 37-57 (AMLA…YFDY), 85-105 (LLFI…DTWI), 128-148 (PLIG…FAGY), 152-172 (EGLI…MTTA), 203-223 (AIIA…LYIY), 228-248 (INYL…AVLL), and 263-283 (LKTG…TITF).

This sequence belongs to the UbiA prenyltransferase family. DGGGP synthase subfamily. The cofactor is Mg(2+).

It localises to the cell membrane. The enzyme catalyses sn-3-O-(geranylgeranyl)glycerol 1-phosphate + (2E,6E,10E)-geranylgeranyl diphosphate = 2,3-bis-O-(geranylgeranyl)-sn-glycerol 1-phosphate + diphosphate. It participates in membrane lipid metabolism; glycerophospholipid metabolism. Prenyltransferase that catalyzes the transfer of the geranylgeranyl moiety of geranylgeranyl diphosphate (GGPP) to the C2 hydroxyl of (S)-3-O-geranylgeranylglyceryl phosphate (GGGP). This reaction is the second ether-bond-formation step in the biosynthesis of archaeal membrane lipids. The sequence is that of Digeranylgeranylglyceryl phosphate synthase from Methanobrevibacter smithii (strain ATCC 35061 / DSM 861 / OCM 144 / PS).